A 663-amino-acid polypeptide reads, in one-letter code: Zinc finger protein 44 (663 aa).

The KRAB domain occupies 52-138 (VAFEDVAVNF…GETLSQIRNS (87 aa)). The C2H2-type 1; atypical zinc finger occupies 189–211 (YTHKQCGKGLSYRHSFQTCERPH). The C2H2-type 2; degenerate zinc-finger motif lies at 217–239 (YDCKECGKTFSSPGNLRRHMVVK). C2H2-type zinc fingers lie at residues 245–267 (YKCELCGKAFFWPSLLRMHERTH), 273–295 (YECKQCSKAFPVYSSYLRHEKIH), 301–323 (YECKQCSKAFPDYSSYLRHERTH), 329–351 (YKCKQCGKAFSVSGSLRVHERIH), 357–379 (YTCKQCGKAFCHLGSFQRHMIMH), 385–407 (HKCKICGKGFDFPGSARIHEGTH), 413–435 (YECKQCGKLLSHRSSFRRHMMAH), 441–463 (HKCTVCGKAFDSPSVFQRHERTH), 469–491 (YECKQCGKAFRTSSSLRKHETTH), 497–518 (YKCKCGKAFSDLFSFQSHETTH), 524–546 (YECKECGKAFSSFKYFCRHERTH), 552–574 (YECQICGKAFSRFSYLKTHERTH), 580–602 (YECKQCRKAFFWPSFLLRHERTH), 608–630 (YECKHCGKAFSRSSFCREHERTH), and 636–658 (YECKECGKAFSSLSSFNRHKRTH).

It belongs to the krueppel C2H2-type zinc-finger protein family.

Its subcellular location is the nucleus. In terms of biological role, may be involved in transcriptional regulation. In Homo sapiens (Human), this protein is Zinc finger protein 44 (ZNF44).